Reading from the N-terminus, the 582-residue chain is DNA mismatch repair protein MutL (582 aa).

Belongs to the DNA mismatch repair MutL/HexB family.

Its function is as follows. This protein is involved in the repair of mismatches in DNA. It is required for dam-dependent methyl-directed DNA mismatch repair. May act as a 'molecular matchmaker', a protein that promotes the formation of a stable complex between two or more DNA-binding proteins in an ATP-dependent manner without itself being part of a final effector complex. This is DNA mismatch repair protein MutL from Chlamydia abortus (strain DSM 27085 / S26/3) (Chlamydophila abortus).